The following is a 138-amino-acid chain: Basic phospholipase A2 homolog Tbo-K49 (138 aa).

Positions 1-16 are cleaved as a signal peptide; the sequence is MRTLWIMAVLLVGVEG. Cystine bridges form between Cys42–Cys131, Cys44–Cys60, Cys59–Cys111, Cys65–Cys138, Cys66–Cys104, and Cys91–Cys102. The important for membrane-damaging activities in eukaryotes and bacteria; heparin-binding stretch occupies residues 121 to 133; sequence KKERINTKIFCKK.

Monomer. As to expression, expressed by the venom gland.

Its subcellular location is the secreted. Snake venom phospholipase A2 homolog that lacks catalytic activity. It induces local edema. Is myotoxic. A model of myotoxic mechanism has been proposed: an apo Lys49-PLA2 is activated by the entrance of a hydrophobic molecule (e.g. fatty acid) at the hydrophobic channel of the protein leading to a reorientation of a monomer. This reorientation causes a transition between 'inactive' to 'active' states, causing alignment of C-terminal and membrane-docking sites (MDoS) side-by-side and putting the membrane-disruption sites (MDiS) in the same plane, exposed to solvent and in a symmetric position for both monomers. The MDoS region stabilizes the toxin on membrane by the interaction of charged residues with phospholipid head groups. Subsequently, the MDiS region destabilizes the membrane with penetration of hydrophobic residues. This insertion causes a disorganization of the membrane, allowing an uncontrolled influx of ions (i.e. calcium and sodium), and eventually triggering irreversible intracellular alterations and cell death. This Craspedocephalus borneensis (Borneo pit viper) protein is Basic phospholipase A2 homolog Tbo-K49.